A 323-amino-acid polypeptide reads, in one-letter code: Olfactory receptor 52B2 (323 aa).

Over 1–27 the chain is Extracellular; it reads MSHTNVTIFHPAVFVLPGIPGLEAYHI. N5 is a glycosylation site (N-linked (GlcNAc...) asparagine). Residues 28–48 form a helical membrane-spanning segment; sequence WLSIPLCLIYITAVLGNSILI. The Cytoplasmic segment spans residues 49–56; the sequence is VVIVMERN. A helical transmembrane segment spans residues 57 to 77; the sequence is LHVPMYFFLSMLAVMDILLST. Residues 78-101 lie on the Extracellular side of the membrane; sequence TTVPKALAIFWLQAHNIAFDACVT. C99 and C191 are joined by a disulfide. Residues 102–122 traverse the membrane as a helical segment; it reads QGFFVHMMFVGESAILLAMAF. Over 123–141 the chain is Cytoplasmic; it reads DRFVAICAPLRYTTVLTWP. Residues 142-162 traverse the membrane as a helical segment; sequence VVGRIALAVITRSFCIIFPVI. At 163–198 the chain is on the extracellular side; the sequence is FLLKRLPFCLTNIVPHSYCEHIGVARLACADITVNI. A helical membrane pass occupies residues 199 to 219; the sequence is WYGFSVPIVMVILDVILIAVS. At 220–239 the chain is on the cytoplasmic side; it reads YSLILRAVFRLPSQDARHKA. Residues 240–260 traverse the membrane as a helical segment; it reads LSTCGSHLCVILMFYVPSFFT. Topologically, residues 261–275 are extracellular; sequence LLTHHFGRNIPQHVH. Residues 276–296 traverse the membrane as a helical segment; sequence ILLANLYVAVPPMLNPIVYGV. The Cytoplasmic portion of the chain corresponds to 297-323; sequence KTKQIREGVAHRFFDIKTWCCTSPLGS.

It belongs to the G-protein coupled receptor 1 family.

It localises to the cell membrane. In terms of biological role, odorant receptor. The chain is Olfactory receptor 52B2 (OR52B2) from Homo sapiens (Human).